A 182-amino-acid polypeptide reads, in one-letter code: Gamma-crystallin N (182 aa).

Beta/gamma crystallin 'Greek key' domains follow at residues 6 to 46 (GKIT…HVES), 47 to 89 (GAWV…RPVG), and 95 to 136 (FRLE…KVYG). A disordered region spans residues 153–182 (LSSSLQSDQGPEEATTKPATTQPPFLTANL). Residues 169–182 (KPATTQPPFLTANL) show a composition bias toward polar residues.

Belongs to the beta/gamma-crystallin family. In terms of assembly, monomer. Not specifically expressed in eye.

This Homo sapiens (Human) protein is Gamma-crystallin N.